Here is a 516-residue protein sequence, read N- to C-terminus: Effector protein hopAB1 (516 aa).

Disordered regions lie at residues 1-93 (MSGI…AQPA) and 175-259 (RALA…DEAL). A compositionally biased stretch (basic and acidic residues) spans 16-30 (WRADDEPVTERERDS). Positions 31–41 (SSGANLTNSPQ) are enriched in polar residues. Pro residues predominate over residues 81-90 (PVEPRQPPEA). 2 stretches are compositionally biased toward low complexity: residues 183 to 196 (PAPS…SRSS) and 212 to 224 (QTSS…SSTS).

This sequence belongs to the HopAB family.

Its subcellular location is the secreted. Its function is as follows. Effector protein that plays different roles depending on the species and plant cultivars that interact with the pathogen. Acts as a virulence determinant by enhancing the development of disease symptoms and bacterial growth. Acts as an avirulence factor by eliciting hypersensitive response (HR) and plant resistance. The protein is Effector protein hopAB1 (hopAB1) of Pseudomonas syringae pv. syringae (strain B728a).